The chain runs to 476 residues: MKFSTAVTTLISSGAIVSALPHVDVHQEDAHQHKRAVAYKYVYETVVVDSDGHTVTPAASEVATAATSAIITTSVLAPTSSAAAADSSASIAVSSAALAKNEKISDAAASATASTSQGASSSSSSSSATSTLESSSVSSSSEEAAPTSTVVSTSSATQSSASSATKSSTSSTSPSTSTSTSTSSTSSSSSSSSSSSSSSSGSGSIYGDLADFSGPSEKFQDGTIPCDKFPSGQGVISIDWIGEGGWSGVENTDTSTGGSCKEGSYCSYSCQPGMSKTQWPSDQPSDGRSVGGLLCKNGYLYRSNTDADYLCEWGVEAAYVVSKLSKGVAICRTDYPGTENMVIPTYVEGGSSLPLTVVDQDTYFTWEGKKTSAQYYVNNAGVSVEDGCIWGTSGSGIGNWAPLNFGAGSTGGVTYLSLIPNPNNSDALNYNVKIVAADDSSNVIGECVYENGEFSGGADGCTVSVTSGKAHFVLYN.

Residues methionine 1–alanine 19 form the signal peptide. The segment covering alanine 111–glycine 203 has biased composition (low complexity). The interval alanine 111 to glycine 214 is disordered. Residue asparagine 423 is glycosylated (N-linked (GlcNAc...) asparagine).

The protein belongs to the SUN family.

Its subcellular location is the secreted. It is found in the cell wall. Functionally, involved in the remodeling of the cell wall during the various phases of yeast culture development and under various environmental conditions. Required for the maintenance of the CLB5 kinase activity. The polypeptide is Probable secreted beta-glucosidase SIM1 (SIM1) (Saccharomyces cerevisiae (strain ATCC 204508 / S288c) (Baker's yeast)).